A 705-amino-acid polypeptide reads, in one-letter code: Elongation factor G (705 aa).

The tr-type G domain maps to 7–287; the sequence is HLTRNIGIMA…YVCAFLPSPL (281 aa). Residues 16-23, 84-88, and 138-141 each bind GTP; these read AHIDAGKT, DTPGH, and NKMD. The interval 291–312 is disordered; it reads NVVGTNPDTGAEEDRKPSEDDK. Positions 302–312 are enriched in basic and acidic residues; that stretch reads EEDRKPSEDDK.

The protein belongs to the TRAFAC class translation factor GTPase superfamily. Classic translation factor GTPase family. EF-G/EF-2 subfamily.

It localises to the cytoplasm. Functionally, catalyzes the GTP-dependent ribosomal translocation step during translation elongation. During this step, the ribosome changes from the pre-translocational (PRE) to the post-translocational (POST) state as the newly formed A-site-bound peptidyl-tRNA and P-site-bound deacylated tRNA move to the P and E sites, respectively. Catalyzes the coordinated movement of the two tRNA molecules, the mRNA and conformational changes in the ribosome. The protein is Elongation factor G of Bacteroides fragilis (strain ATCC 25285 / DSM 2151 / CCUG 4856 / JCM 11019 / LMG 10263 / NCTC 9343 / Onslow / VPI 2553 / EN-2).